The chain runs to 345 residues: Phosphoribosylformylglycinamidine cyclo-ligase (345 aa).

Belongs to the AIR synthase family.

Its subcellular location is the cytoplasm. It catalyses the reaction 2-formamido-N(1)-(5-O-phospho-beta-D-ribosyl)acetamidine + ATP = 5-amino-1-(5-phospho-beta-D-ribosyl)imidazole + ADP + phosphate + H(+). The protein operates within purine metabolism; IMP biosynthesis via de novo pathway; 5-amino-1-(5-phospho-D-ribosyl)imidazole from N(2)-formyl-N(1)-(5-phospho-D-ribosyl)glycinamide: step 2/2. This is Phosphoribosylformylglycinamidine cyclo-ligase from Shewanella amazonensis (strain ATCC BAA-1098 / SB2B).